Here is a 1852-residue protein sequence, read N- to C-terminus: Chitin synthase csmA (1852 aa).

Residues 1–20 (MVGTLPAGHTPSHVQSSLPS) form a disordered region. Residues 1-787 (MVGTLPAGHT…CWADLAKVGE (787 aa)) form the Myosin motor domain. Asparagine 58 carries an N-linked (GlcNAc...) asparagine glycan. 102–109 (GESGAGKT) contacts ATP. Residues 599–646 (SSKPLRMPSMARRKTSPASRLTFDATPAEDPYETESQTGSSAKNSSAK) are disordered. Asparagine 642 is a glycosylation site (N-linked (GlcNAc...) asparagine). The actin-binding stretch occupies residues 667-691 (LDIVNKCLTSGNLNPYFVFCLKPND). Asparagine 840 carries N-linked (GlcNAc...) asparagine glycosylation. 2 helical membrane passes run 895–915 (WMAI…RYIG) and 930–950 (FAIN…IVGF). Residues 958-1017 (QHVYSPAELSSHDGKDGHSSYTSIRGLVLDLGEFMDSHYPGIVPDSALKKYAGVDSTALF) form the Cytochrome b5 heme-binding domain. 2 N-linked (GlcNAc...) asparagine glycosylation sites follow: asparagine 1044 and asparagine 1195. A helical transmembrane segment spans residues 1205-1225 (FILAISVLICSVIVFKFFAAL). 3 N-linked (GlcNAc...) asparagine glycosylation sites follow: asparagine 1428, asparagine 1462, and asparagine 1568. 3 consecutive transmembrane segments (helical) span residues 1600–1620 (ISTI…VWLV), 1626–1646 (IPWT…IIFI), and 1653–1673 (MIGW…ALPL). The region spanning 1794–1849 (LPSDDAILSEIRDILRTADLMTVTKKNIKQELERRFGVNLDAKRPYINSATEAVLS) is the DEK-C domain.

The protein in the N-terminal section; belongs to the TRAFAC class myosin-kinesin ATPase superfamily. Myosin family. It in the C-terminal section; belongs to the chitin synthase family. Class V subfamily. Binds F-actin via its N-terminal myosin motor-like domain (MMD). Interacts with kibesin kinA.

It localises to the cell membrane. The protein resides in the cell septum. It is found in the cell tip. The catalysed reaction is [(1-&gt;4)-N-acetyl-beta-D-glucosaminyl](n) + UDP-N-acetyl-alpha-D-glucosamine = [(1-&gt;4)-N-acetyl-beta-D-glucosaminyl](n+1) + UDP + H(+). In terms of biological role, polymerizes chitin, a structural polymer of the cell wall and septum, by transferring the sugar moiety of UDP-GlcNAc to the non-reducing end of the growing chitin polymer. Plays an important role in polarized hyphal cell wall synthesis and maintenance of cell wall integrity. Its role in growth and morphogenesis is particularly important under low osmotic conditions. This Emericella nidulans (Aspergillus nidulans) protein is Chitin synthase csmA.